The chain runs to 348 residues: Phospho-2-dehydro-3-deoxyheptonate aldolase, Trp-sensitive (348 aa).

The protein belongs to the class-I DAHP synthase family.

It catalyses the reaction D-erythrose 4-phosphate + phosphoenolpyruvate + H2O = 7-phospho-2-dehydro-3-deoxy-D-arabino-heptonate + phosphate. Its pathway is metabolic intermediate biosynthesis; chorismate biosynthesis; chorismate from D-erythrose 4-phosphate and phosphoenolpyruvate: step 1/7. Functionally, stereospecific condensation of phosphoenolpyruvate (PEP) and D-erythrose-4-phosphate (E4P) giving rise to 3-deoxy-D-arabino-heptulosonate-7-phosphate (DAHP). In Shigella flexneri, this protein is Phospho-2-dehydro-3-deoxyheptonate aldolase, Trp-sensitive (aroH).